Here is a 438-residue protein sequence, read N- to C-terminus: Adenylosuccinate synthetase (438 aa).

GTP is bound by residues 12 to 18 (GDEGKGK) and 40 to 42 (GHT). Asp-13 acts as the Proton acceptor in catalysis. Positions 13 and 40 each coordinate Mg(2+). Residues 13-16 (DEGK), 38-41 (NAGH), Thr-128, Arg-142, Gln-223, Thr-238, and Arg-302 each bind IMP. The Proton donor role is filled by His-41. 298 to 304 (TTTGRPR) is a binding site for substrate. GTP is bound by residues Arg-304, 330 to 332 (KLD), and 412 to 414 (GVG).

The protein belongs to the adenylosuccinate synthetase family. As to quaternary structure, homodimer. Mg(2+) serves as cofactor.

It is found in the cytoplasm. The enzyme catalyses IMP + L-aspartate + GTP = N(6)-(1,2-dicarboxyethyl)-AMP + GDP + phosphate + 2 H(+). Its pathway is purine metabolism; AMP biosynthesis via de novo pathway; AMP from IMP: step 1/2. In terms of biological role, plays an important role in the de novo pathway of purine nucleotide biosynthesis. Catalyzes the first committed step in the biosynthesis of AMP from IMP. This chain is Adenylosuccinate synthetase, found in Leifsonia xyli subsp. xyli (strain CTCB07).